Reading from the N-terminus, the 118-residue chain is UPF0295 protein BA_0538/GBAA_0538/BAS0506 (118 aa).

2 helical membrane passes run 12 to 32 (IRTF…LGVF) and 43 to 63 (FMMV…WIGM).

It belongs to the UPF0295 family.

It localises to the cell membrane. This chain is UPF0295 protein BA_0538/GBAA_0538/BAS0506, found in Bacillus anthracis.